Reading from the N-terminus, the 410-residue chain is Argininosuccinate synthase (410 aa).

ATP contacts are provided by residues 14-22 (AYSGGLDTS) and Ala-41. L-citrulline contacts are provided by Tyr-92 and Ser-97. Gly-122 is a binding site for ATP. The L-aspartate site is built by Thr-124, Asn-128, and Asp-129. Position 128 (Asn-128) interacts with L-citrulline. L-citrulline contacts are provided by Arg-132, Ser-183, Ser-192, Glu-268, and Tyr-280.

This sequence belongs to the argininosuccinate synthase family. Type 1 subfamily. As to quaternary structure, homotetramer.

Its subcellular location is the cytoplasm. The catalysed reaction is L-citrulline + L-aspartate + ATP = 2-(N(omega)-L-arginino)succinate + AMP + diphosphate + H(+). It participates in amino-acid biosynthesis; L-arginine biosynthesis; L-arginine from L-ornithine and carbamoyl phosphate: step 2/3. The sequence is that of Argininosuccinate synthase from Parvibaculum lavamentivorans (strain DS-1 / DSM 13023 / NCIMB 13966).